A 242-amino-acid chain; its full sequence is Probable porphobilinogen deaminase (242 aa).

Belongs to the HMBS family.

The enzyme catalyses 4 porphobilinogen + H2O = hydroxymethylbilane + 4 NH4(+). It participates in porphyrin-containing compound metabolism; protoporphyrin-IX biosynthesis; coproporphyrinogen-III from 5-aminolevulinate: step 2/4. Its function is as follows. Tetrapolymerization of the monopyrrole PBG into the hydroxymethylbilane pre-uroporphyrinogen in several discrete steps. The sequence is that of Probable porphobilinogen deaminase (hemC) from Chlamydia muridarum (strain MoPn / Nigg).